The chain runs to 404 residues: Ubiquitin-like modifier-activating enzyme 5 (404 aa).

At Ser-45 the chain carries Phosphoserine. The ATP site is built by Gly-83, Asp-104, Lys-127, Asn-150, and Asn-184. Zn(2+) is bound by residues Cys-226 and Cys-229. Cys-250 acts as the Glycyl thioester intermediate in catalysis. 2 residues coordinate Zn(2+): Cys-303 and Cys-308. The UFM1-interacting sequence (UIS) motif lies at 334–346 (IIHEDNEWGIELV). A linker region spans residues 347–377 (SEISEEELKKSSGPIPDLPEGIIVAYTVPQK). 2 positions are modified to phosphoserine: Ser-358 and Ser-393. Residues 389-404 (DSGESLEDLMAKMKNI) carry the UFC1-binding sequence (UFC) motif.

This sequence belongs to the ubiquitin-activating E1 family. UBA5 subfamily. In terms of assembly, homodimer; homodimerization is required for UFM1 activation. Interacts (via UIS motif) with UFM1; binds UFM1 via a trans-binding mechanism in which UFM1 interacts with distinct sites in both subunits of the UBA5 homodimer. Interacts (via C-terminus) with UFC1. Interacts (via UIS motif) with GABARAPL2 and, with lower affinity, with GABARAP and GABARAPL1.

It localises to the cytoplasm. The protein resides in the nucleus. It is found in the endoplasmic reticulum membrane. The protein localises to the golgi apparatus. Functionally, E1-like enzyme which specifically catalyzes the first step in ufmylation. Activates UFM1 by first adenylating its C-terminal glycine residue with ATP, and thereafter linking this residue to the side chain of a cysteine residue in E1, yielding a UFM1-E1 thioester and free AMP. Activates UFM1 via a trans-binding mechanism, in which UFM1 interacts with distinct sites in both subunits of the UBA5 homodimer. Trans-binding also promotes stabilization of the UBA5 homodimer, and enhances ATP-binding. Transfer of UFM1 from UBA5 to the E2-like enzyme UFC1 also takes place using a trans mechanism. Ufmylation plays a key role in various processes, such as ribosome recycling, response to DNA damage, interferon response or reticulophagy (also called ER-phagy). Ufmylation is essential for erythroid differentiation of both megakaryocytes and erythrocytes. The sequence is that of Ubiquitin-like modifier-activating enzyme 5 from Bos taurus (Bovine).